Here is a 135-residue protein sequence, read N- to C-terminus: NADH-quinone oxidoreductase subunit K (135 aa).

3 consecutive transmembrane segments (helical) span residues 33-53, 63-83, and 95-115; these read VLGL…FAIG, FLFM…AFVV, and IMFI…LAIL.

It belongs to the complex I subunit 4L family. In terms of assembly, NDH-1 is composed of 14 different subunits. Subunits NuoA, H, J, K, L, M, N constitute the membrane sector of the complex.

Its subcellular location is the cell inner membrane. It carries out the reaction a quinone + NADH + 5 H(+)(in) = a quinol + NAD(+) + 4 H(+)(out). Its function is as follows. NDH-1 shuttles electrons from NADH, via FMN and iron-sulfur (Fe-S) centers, to quinones in the respiratory chain. The immediate electron acceptor for the enzyme in this species is believed to be ubiquinone. Couples the redox reaction to proton translocation (for every two electrons transferred, four hydrogen ions are translocated across the cytoplasmic membrane), and thus conserves the redox energy in a proton gradient. In Psychrobacter cryohalolentis (strain ATCC BAA-1226 / DSM 17306 / VKM B-2378 / K5), this protein is NADH-quinone oxidoreductase subunit K.